The sequence spans 142 residues: Hemoglobin subunit alpha-A (142 aa).

The Globin domain occupies 2-142 (VLSAADKTNV…VGAVLTAKYR (141 aa)). H59 contributes to the O2 binding site. Residue H88 participates in heme b binding.

The protein belongs to the globin family. As to quaternary structure, heterotetramer of two alpha chains and two beta chains. In terms of tissue distribution, red blood cells.

In terms of biological role, involved in oxygen transport from the lung to the various peripheral tissues. The protein is Hemoglobin subunit alpha-A (HBAA) of Anas platyrhynchos (Mallard).